We begin with the raw amino-acid sequence, 335 residues long: NADH-quinone oxidoreductase subunit H (335 aa).

Helical transmembrane passes span 12–32 (IIAV…GALL), 81–101 (VIFT…FAVI), 114–134 (IGLL…LFAG), 154–174 (VSYE…VGSF), 187–207 (LWFI…GVAV), 238–258 (FFVG…TLFF), 270–290 (SLAF…FILL), and 307–327 (WKFC…IVLL).

It belongs to the complex I subunit 1 family. As to quaternary structure, NDH-1 is composed of 13 different subunits. Subunits NuoA, H, J, K, L, M, N constitute the membrane sector of the complex.

Its subcellular location is the cell inner membrane. It carries out the reaction a quinone + NADH + 5 H(+)(in) = a quinol + NAD(+) + 4 H(+)(out). NDH-1 shuttles electrons from NADH, via FMN and iron-sulfur (Fe-S) centers, to quinones in the respiratory chain. The immediate electron acceptor for the enzyme in this species is believed to be ubiquinone. Couples the redox reaction to proton translocation (for every two electrons transferred, four hydrogen ions are translocated across the cytoplasmic membrane), and thus conserves the redox energy in a proton gradient. This subunit may bind ubiquinone. This chain is NADH-quinone oxidoreductase subunit H, found in Pseudomonas syringae pv. syringae (strain B728a).